We begin with the raw amino-acid sequence, 128 residues long: Large ribosomal subunit protein bL17 (128 aa).

Belongs to the bacterial ribosomal protein bL17 family. As to quaternary structure, part of the 50S ribosomal subunit. Contacts protein L32.

This chain is Large ribosomal subunit protein bL17, found in Streptococcus uberis (strain ATCC BAA-854 / 0140J).